We begin with the raw amino-acid sequence, 928 residues long: BCAS3 microtubule associated cell migration factor (928 aa).

N-acetylmethionine is present on methionine 1. A Glycyl lysine isopeptide (Lys-Gly) (interchain with G-Cter in SUMO1); alternate cross-link involves residue lysine 215. Residue lysine 215 forms a Glycyl lysine isopeptide (Lys-Gly) (interchain with G-Cter in SUMO2); alternate linkage. Required for recruitment to preautophagosomal structure in response to mitophagy stretches follow at residues 254–312 (RGGA…SRRS) and 437–560 (YGGQ…IKAP). Residues serine 461, serine 480, and serine 488 each carry the phosphoserine modification. Disordered regions lie at residues 472–518 (TSKQ…PRLS) and 795–816 (VRSD…RGVS). 2 stretches are compositionally biased toward low complexity: residues 480–494 (SPVP…GSPL) and 505–514 (NNFTNNNPGN). Phosphoserine is present on residues serine 838, serine 886, and serine 898. The disordered stretch occupies residues 868 to 928 (ESPSRDVVGS…PLSLFPTGFP (61 aa)). The span at 887 to 901 (IETLSNSSGSTSGSI) shows a compositional bias: low complexity.

It belongs to the BCAS3 family. In terms of assembly, interacts with histone H3, ESR1, KAT2B and PELP1; the interactions occur in a estrogen-dependent manner. Interacts with beta-tubulin and VIM. Interacts (via C-terminal) with PHAF1; the interaction is requrired for the association with the phagophore. In terms of tissue distribution, expressed in blood islands and yolk sac blood islands (at protein level). Highly expressed in mammary tumors. Expressed in eostrogen-induced epithelial cells of mammary glands. Expressed in brain, heart, kidney, lung, liver and spleen. Expressed in embryonic stem cells, embryoid bodies, endothelial cells and fibroblasts.

The protein resides in the nucleus. The protein localises to the cytoplasm. It localises to the cytoskeleton. It is found in the preautophagosomal structure. Functions synergistically with PELP1 as a transcriptional coactivator of estrogen receptor-responsive genes. Stimulates histone acetyltransferase activity. Binds to chromatin. Plays a role in angiogenesis. Participates in the regulation of cell polarity and directional endothelial cell migration by mediating both the activation and recruitment of CDC42 and the reorganization of the actin cytoskeleton at the cell leading edge. Promotes filipodia formation. Plays a regulatory role in autophagic activity. In complex with PHAF1, associates with the preautophagosomal structure during both non-selective and selective autophagy. Probably binds phosphatidylinositol 3-phosphate (PtdIns3P) which would mediate the recruitment preautophagosomal structures. The polypeptide is BCAS3 microtubule associated cell migration factor (Mus musculus (Mouse)).